We begin with the raw amino-acid sequence, 653 residues long: MTSQYAGELCTLLVEDNFGELFARIFSTLNRYDRLSFSRLKFYSRLSNAQLRHGLAAMIQQHLVYHYTSYDDGITYYEPNMQSAYYLVRSGKILELIEHRLGKYAATVMSTIMFLGHAQVGYLETLPALRPSNSDVNRASEERGGIHETEEYHGEEARQETEEHRETEGRPNGLNSDYTSSERPALLHPTLKALAGHGYILRVRDAQFQSYADNALDAERTIKSRPDIKALKGKKLDEAVTEGTLELLKERLDGDLTRGLMFNGVPRGAKRRHTTGATEASNKKARVDYAAVDEDEDGGEENEWSDDDFGEDTIPMESGITVRINYEKLDVALRNRRFLELAERDSSPVTAEVYESLLRRIEYQTAKCRDTTEIPREGEEGEHYSVPVPLRAVVEDVDLFLDLAGSVGPMEVSQPINRRGKRPLEETTNGAAHDGTNGGQSDGNRTYEVDQHLCLLAQPPYSLTSKRMVSGLITWTVEFRHLARKLRHLELERIIEARYGDVALRVVRVLHDKGKLDEKRLQEISLLPFKDLRQVLASMQTGGFVDLQEVPRDALRQPSKTIFLWFYDPDRVGNSVLEDTYKAMSRCLQRLRFERSRLKEFLEKTERSDVKGNEERYLSEAELTLLGQWRAKEALLLGEVARLDEMVAVIRDY.

4 disordered regions span residues 131 to 181 (PSNS…YTSS), 266 to 285 (PRGAKRRHTTGATEASNKKA), 293 to 312 (DEDEDGGEENEWSDDDFGED), and 412 to 444 (VSQPINRRGKRPLEETTNGAAHDGTNGGQSDGN). Residues 138-169 (RASEERGGIHETEEYHGEEARQETEEHRETEG) are compositionally biased toward basic and acidic residues. Residues 293–311 (DEDEDGGEENEWSDDDFGE) show a composition bias toward acidic residues. Residues 580–601 (TYKAMSRCLQRLRFERSRLKEF) are leucine-zipper.

Belongs to the RNA polymerase beta chain family. Component of the RNA polymerase III (Pol III) complex consisting of 17 subunits.

Its subcellular location is the nucleus. Its function is as follows. DNA-dependent RNA polymerase catalyzes the transcription of DNA into RNA using the four ribonucleoside triphosphates as substrates. Specific core component of RNA polymerase III which synthesizes small RNAs, such as 5S rRNA and tRNAs. The sequence is that of DNA-directed RNA polymerase III subunit rpc3 (rpc82) from Aspergillus oryzae (strain ATCC 42149 / RIB 40) (Yellow koji mold).